The chain runs to 191 residues: Large ribosomal subunit protein uL3 (191 aa).

The tract at residues Ala-119–Pro-138 is disordered.

It belongs to the universal ribosomal protein uL3 family. As to quaternary structure, part of the 50S ribosomal subunit. Forms a cluster with proteins L14 and L19.

Functionally, one of the primary rRNA binding proteins, it binds directly near the 3'-end of the 23S rRNA, where it nucleates assembly of the 50S subunit. The protein is Large ribosomal subunit protein uL3 (rplC) of Helicobacter pylori (strain ATCC 700392 / 26695) (Campylobacter pylori).